The chain runs to 229 residues: uncharacterized protein (229 aa).

The N-terminal stretch at 1–17 is a signal peptide; that stretch reads MKKIIALMLFLTFFAHA.

This is an uncharacterized protein from Escherichia coli O157:H7.